Here is a 227-residue protein sequence, read N- to C-terminus: Probable cytokinin riboside 5'-monophosphate phosphoribohydrolase LOGL9 (227 aa).

Positions 1 to 15 (MYISSPHTSHFTSID) are enriched in polar residues. Residues 1-26 (MYISSPHTSHFTSIDRSPAVVSESDR) form a disordered region. Substrate contacts are provided by residues glutamate 117, 135 to 136 (RK), and 152 to 158 (GYGTLEE).

This sequence belongs to the LOG family. In terms of tissue distribution, expressed in roots, leaves and stems.

The catalysed reaction is N(6)-(dimethylallyl)adenosine 5'-phosphate + H2O = N(6)-dimethylallyladenine + D-ribose 5-phosphate. It catalyses the reaction 9-ribosyl-trans-zeatin 5'-phosphate + H2O = trans-zeatin + D-ribose 5-phosphate. Cytokinin-activating enzyme working in the direct activation pathway. Phosphoribohydrolase that converts inactive cytokinin nucleotides to the biologically active free-base forms. The sequence is that of Probable cytokinin riboside 5'-monophosphate phosphoribohydrolase LOGL9 (LOGL9) from Oryza sativa subsp. japonica (Rice).